The chain runs to 324 residues: tRNA uridine(34) hydroxylase (324 aa).

Positions 122–218 constitute a Rhodanese domain; that stretch reads QENRCLILDV…YGQQVGTGKW (97 aa). C178 functions as the Cysteine persulfide intermediate in the catalytic mechanism.

The protein belongs to the TrhO family.

It catalyses the reaction uridine(34) in tRNA + AH2 + O2 = 5-hydroxyuridine(34) in tRNA + A + H2O. In terms of biological role, catalyzes oxygen-dependent 5-hydroxyuridine (ho5U) modification at position 34 in tRNAs. This chain is tRNA uridine(34) hydroxylase, found in Chlamydia pneumoniae (Chlamydophila pneumoniae).